Here is a 204-residue protein sequence, read N- to C-terminus: Imidazoleglycerol-phosphate dehydratase (204 aa).

It belongs to the imidazoleglycerol-phosphate dehydratase family.

The protein localises to the cytoplasm. It carries out the reaction D-erythro-1-(imidazol-4-yl)glycerol 3-phosphate = 3-(imidazol-4-yl)-2-oxopropyl phosphate + H2O. It functions in the pathway amino-acid biosynthesis; L-histidine biosynthesis; L-histidine from 5-phospho-alpha-D-ribose 1-diphosphate: step 6/9. This Albidiferax ferrireducens (strain ATCC BAA-621 / DSM 15236 / T118) (Rhodoferax ferrireducens) protein is Imidazoleglycerol-phosphate dehydratase.